A 211-amino-acid polypeptide reads, in one-letter code: Large ribosomal subunit protein eL13 (211 aa).

K16 is subject to N6-acetyllysine. A phosphoserine mark is found at S52, S77, and S106. Glycyl lysine isopeptide (Lys-Gly) (interchain with G-Cter in SUMO2) cross-links involve residues K123 and K145. A Glycyl lysine isopeptide (Lys-Gly) (interchain with G-Cter in SUMO1); alternate cross-link involves residue K174. Residues K174 and K177 each participate in a glycyl lysine isopeptide (Lys-Gly) (interchain with G-Cter in SUMO2); alternate cross-link. The residue at position 177 (K177) is an N6-acetyllysine; alternate.

The protein belongs to the eukaryotic ribosomal protein eL13 family. Component of the 60S large ribosomal subunit (LSU).

It localises to the cytoplasm. Its function is as follows. Component of the ribosome, a large ribonucleoprotein complex responsible for the synthesis of proteins in the cell. The small ribosomal subunit (SSU) binds messenger RNAs (mRNAs) and translates the encoded message by selecting cognate aminoacyl-transfer RNA (tRNA) molecules. The large subunit (LSU) contains the ribosomal catalytic site termed the peptidyl transferase center (PTC), which catalyzes the formation of peptide bonds, thereby polymerizing the amino acids delivered by tRNAs into a polypeptide chain. The nascent polypeptides leave the ribosome through a tunnel in the LSU and interact with protein factors that function in enzymatic processing, targeting, and the membrane insertion of nascent chains at the exit of the ribosomal tunnel. As part of the LSU, it is probably required for its formation and the maturation of rRNAs. Plays a role in bone development. This chain is Large ribosomal subunit protein eL13 (Rpl13), found in Rattus norvegicus (Rat).